The primary structure comprises 631 residues: Phosphomethylpyrimidine synthase (631 aa).

Residues Asn-239, Met-268, Tyr-297, His-333, 353–355 (SRG), 394–397 (DGLR), and Glu-433 each bind substrate. A Zn(2+)-binding site is contributed by His-437. Tyr-460 contacts substrate. His-501 is a binding site for Zn(2+). [4Fe-4S] cluster-binding residues include Cys-581, Cys-584, and Cys-589.

It belongs to the ThiC family. In terms of assembly, homodimer. [4Fe-4S] cluster is required as a cofactor.

The catalysed reaction is 5-amino-1-(5-phospho-beta-D-ribosyl)imidazole + S-adenosyl-L-methionine = 4-amino-2-methyl-5-(phosphooxymethyl)pyrimidine + CO + 5'-deoxyadenosine + formate + L-methionine + 3 H(+). The protein operates within cofactor biosynthesis; thiamine diphosphate biosynthesis. Its function is as follows. Catalyzes the synthesis of the hydroxymethylpyrimidine phosphate (HMP-P) moiety of thiamine from aminoimidazole ribotide (AIR) in a radical S-adenosyl-L-methionine (SAM)-dependent reaction. This chain is Phosphomethylpyrimidine synthase, found in Salmonella paratyphi C (strain RKS4594).